A 137-amino-acid polypeptide reads, in one-letter code: Small ribosomal subunit protein uS11 (137 aa).

Low complexity predominate over residues 1 to 11; it reads MAKQAKAGAAR. Positions 1–32 are disordered; sequence MAKQAKAGAARRPQRGRRRERKNVPRGQAHVQ. Basic residues predominate over residues 12 to 21; that stretch reads RPQRGRRRER.

Belongs to the universal ribosomal protein uS11 family. As to quaternary structure, part of the 30S ribosomal subunit. Interacts with proteins S7 and S18. Binds to IF-3.

In terms of biological role, located on the platform of the 30S subunit, it bridges several disparate RNA helices of the 16S rRNA. Forms part of the Shine-Dalgarno cleft in the 70S ribosome. The chain is Small ribosomal subunit protein uS11 from Herpetosiphon aurantiacus (strain ATCC 23779 / DSM 785 / 114-95).